The sequence spans 295 residues: Acetylglutamate kinase (295 aa).

Residues 61-62, R83, and N187 each bind substrate; that span reads GG.

This sequence belongs to the acetylglutamate kinase family. ArgB subfamily.

The protein resides in the cytoplasm. It catalyses the reaction N-acetyl-L-glutamate + ATP = N-acetyl-L-glutamyl 5-phosphate + ADP. The protein operates within amino-acid biosynthesis; L-arginine biosynthesis; N(2)-acetyl-L-ornithine from L-glutamate: step 2/4. Catalyzes the ATP-dependent phosphorylation of N-acetyl-L-glutamate. This is Acetylglutamate kinase from Methanocorpusculum labreanum (strain ATCC 43576 / DSM 4855 / Z).